The chain runs to 261 residues: tRNA 5-carboxymethoxyuridine methyltransferase (261 aa).

Residues arginine 26, 52 to 53, aspartate 73, 102 to 103, and histidine 119 each bind S-adenosyl-L-methionine; these read GG and AQ.

The protein belongs to the class I-like SAM-binding methyltransferase superfamily. CmoM family.

It catalyses the reaction 5-carboxymethoxyuridine(34) in tRNA + S-adenosyl-L-methionine = 5-methoxycarbonylmethoxyuridine(34) in tRNA + S-adenosyl-L-homocysteine. In terms of biological role, catalyzes the methylation of 5-carboxymethoxyuridine (cmo5U) to form 5-methoxycarbonylmethoxyuridine (mcmo5U) at position 34 in tRNAs. Four tRNAs (tRNA(Ala1), tRNA(Ser1), tRNA(Pro3) and tRNA(Thr4)) are fully modified with mcmo5U in stationary-phase E.coli. Also present at low frequency in tRNA(Leu3) and tRNA(Val1). This Escherichia coli (strain K12) protein is tRNA 5-carboxymethoxyuridine methyltransferase.